The sequence spans 376 residues: Putative glutamate--cysteine ligase 2 (376 aa).

It belongs to the glutamate--cysteine ligase type 2 family. YbdK subfamily.

The catalysed reaction is L-cysteine + L-glutamate + ATP = gamma-L-glutamyl-L-cysteine + ADP + phosphate + H(+). Functionally, ATP-dependent carboxylate-amine ligase which exhibits weak glutamate--cysteine ligase activity. The sequence is that of Putative glutamate--cysteine ligase 2 from Mycolicibacterium paratuberculosis (strain ATCC BAA-968 / K-10) (Mycobacterium paratuberculosis).